The sequence spans 102 residues: Pole-localizer protein TmaR (102 aa).

The stretch at 7–34 (IINQARRKNKLKRELQDNQKKIRDNQKR) forms a coiled coil.

This sequence belongs to the pole-localizer TmaR family.

It localises to the cytoplasm. Pole-localizer protein involved in the regulation of several cellular processes. The protein is Pole-localizer protein TmaR of Aliivibrio salmonicida (strain LFI1238) (Vibrio salmonicida (strain LFI1238)).